A 20-amino-acid polypeptide reads, in one-letter code: Unknown protein NF009 from 2D-PAGE (20 aa).

The tract at residues 1–20 (ATSAAQGAALDESVRKVLKP) is disordered.

This Naegleria fowleri (Brain eating amoeba) protein is Unknown protein NF009 from 2D-PAGE.